The following is a 106-amino-acid chain: Large ribosomal subunit protein uL24 (106 aa).

This sequence belongs to the universal ribosomal protein uL24 family. Part of the 50S ribosomal subunit.

Functionally, one of two assembly initiator proteins, it binds directly to the 5'-end of the 23S rRNA, where it nucleates assembly of the 50S subunit. One of the proteins that surrounds the polypeptide exit tunnel on the outside of the subunit. The protein is Large ribosomal subunit protein uL24 of Acidiphilium cryptum (strain JF-5).